A 288-amino-acid polypeptide reads, in one-letter code: Polyamine aminopropyltransferase (288 aa).

Positions 9-238 (ETLHDQFGQY…GIMTFAWATD (230 aa)) constitute a PABS domain. Residue glutamine 33 participates in S-methyl-5'-thioadenosine binding. 2 residues coordinate spermidine: histidine 64 and aspartate 88. S-methyl-5'-thioadenosine is bound by residues glutamate 108 and 140-141 (DG). The active-site Proton acceptor is the aspartate 158. 158 to 161 (DCTD) lines the spermidine pocket. Proline 165 provides a ligand contact to S-methyl-5'-thioadenosine.

This sequence belongs to the spermidine/spermine synthase family. Homodimer or homotetramer.

The protein localises to the cytoplasm. The catalysed reaction is S-adenosyl 3-(methylsulfanyl)propylamine + putrescine = S-methyl-5'-thioadenosine + spermidine + H(+). It participates in amine and polyamine biosynthesis; spermidine biosynthesis; spermidine from putrescine: step 1/1. In terms of biological role, catalyzes the irreversible transfer of a propylamine group from the amino donor S-adenosylmethioninamine (decarboxy-AdoMet) to putrescine (1,4-diaminobutane) to yield spermidine. In Shigella dysenteriae serotype 1 (strain Sd197), this protein is Polyamine aminopropyltransferase.